Reading from the N-terminus, the 156-residue chain is S-ribosylhomocysteine lyase (156 aa).

Residues histidine 56, histidine 60, and cysteine 123 each coordinate Fe cation.

This sequence belongs to the LuxS family. As to quaternary structure, homodimer. Requires Fe cation as cofactor.

The enzyme catalyses S-(5-deoxy-D-ribos-5-yl)-L-homocysteine = (S)-4,5-dihydroxypentane-2,3-dione + L-homocysteine. In terms of biological role, involved in the synthesis of autoinducer 2 (AI-2) which is secreted by bacteria and is used to communicate both the cell density and the metabolic potential of the environment. The regulation of gene expression in response to changes in cell density is called quorum sensing. Catalyzes the transformation of S-ribosylhomocysteine (RHC) to homocysteine (HC) and 4,5-dihydroxy-2,3-pentadione (DPD). This is S-ribosylhomocysteine lyase from Staphylococcus aureus (strain Mu3 / ATCC 700698).